Reading from the N-terminus, the 414-residue chain is MAIVSSTTSIIPMSNQVNNNEKGIEDNDHRGGQESHVQNEDEADDHDHDMVMPGFRFHPTEEELIEFYLRRKVEGKRFNVELITFLDLYRYDPWELPAMAAIGEKEWYFYVPRDRKYRNGDRPNRVTTSGYWKATGADRMIRSETSRPIGLKKTLVFYSGKAPKGTRTSWIMNEYRLPHHETEKYQKAEISLCRVYKRPGVEDHPSVPRSLSTRHHNHNSSTSSRLALRQQQHHSSSSNHSDNNLNNNNNINNLEKLSTEYSGDGSTTTTTTNSNSDVTIALANQNIYRPMPYDTSNNTLIVSTRNHQDDDETAIVDDLQRLVNYQISDGGNINHQYFQIAQQFHHTQQQNANANALQLVAAATTATTLMPQTQAALAMNMIPAGTIPNNALWDMWNPIVPDGNRDHYTNIPFK.

Positions 1-21 are enriched in polar residues; sequence MAIVSSTTSIIPMSNQVNNNE. The segment at 1-47 is disordered; it reads MAIVSSTTSIIPMSNQVNNNEKGIEDNDHRGGQESHVQNEDEADDHD. Over residues 22–47 the composition is skewed to basic and acidic residues; that stretch reads KGIEDNDHRGGQESHVQNEDEADDHD. In terms of domain architecture, NAC spans 51 to 198; it reads VMPGFRFHPT…EISLCRVYKR (148 aa). The DNA-binding element occupies 149–204; sequence IGLKKTLVFYSGKAPKGTRTSWIMNEYRLPHHETEKYQKAEISLCRVYKRPGVEDH. The segment at 200–251 is disordered; sequence GVEDHPSVPRSLSTRHHNHNSSTSSRLALRQQQHHSSSSNHSDNNLNNNNNI. Over residues 233 to 251 the composition is skewed to low complexity; that stretch reads HHSSSSNHSDNNLNNNNNI.

Expressed in aerial organs in early stages of seedling development.

The protein resides in the nucleus. In terms of biological role, transcription factor that acts as a floral repressor. Controls flowering time by negatively regulating CONSTANS (CO) expression in a GIGANTEA (GI)-independent manner. Regulates the plant cold response by positive regulation of the cold response genes COR15A and KIN1. May coordinate cold response and flowering time. This Arabidopsis thaliana (Mouse-ear cress) protein is NAC domain-containing protein 35.